Here is a 147-residue protein sequence, read N- to C-terminus: Deoxyuridine 5'-triphosphate nucleotidohydrolase (147 aa).

Arg-24 serves as a coordination point for Mg(2+). DUTP contacts are provided by residues 68 to 70 (PRS), 82 to 85 (GVID), Tyr-88, Gly-93, Ile-95, and Arg-111.

It belongs to the dUTPase family. Mg(2+) is required as a cofactor.

It carries out the reaction dUTP + H2O = dUMP + diphosphate + H(+). Functionally, this enzyme is involved in nucleotide metabolism: it produces dUMP, the immediate precursor of thymidine nucleotides and it decreases the intracellular concentration of dUTP so that uracil cannot be incorporated into DNA. The polypeptide is Deoxyuridine 5'-triphosphate nucleotidohydrolase (OPG046) (Bos taurus (Bovine)).